The chain runs to 124 residues: Small ribosomal subunit protein uS12 (124 aa).

Asp-89 is modified (3-methylthioaspartic acid). A disordered region spans residues 105–124 (QGVKNRKQARSRYGAKKEKS). A compositionally biased stretch (basic residues) spans 108–118 (KNRKQARSRYG).

It belongs to the universal ribosomal protein uS12 family. As to quaternary structure, part of the 30S ribosomal subunit. Contacts proteins S8 and S17. May interact with IF1 in the 30S initiation complex.

Its function is as follows. With S4 and S5 plays an important role in translational accuracy. Functionally, interacts with and stabilizes bases of the 16S rRNA that are involved in tRNA selection in the A site and with the mRNA backbone. Located at the interface of the 30S and 50S subunits, it traverses the body of the 30S subunit contacting proteins on the other side and probably holding the rRNA structure together. The combined cluster of proteins S8, S12 and S17 appears to hold together the shoulder and platform of the 30S subunit. The chain is Small ribosomal subunit protein uS12 from Mycobacteroides abscessus (strain ATCC 19977 / DSM 44196 / CCUG 20993 / CIP 104536 / JCM 13569 / NCTC 13031 / TMC 1543 / L948) (Mycobacterium abscessus).